The chain runs to 115 residues: RPRSDDSLQTLSRLLEDEYGHYLPSDELNNEAEEMSPAASLPELNADQSDLELPWERESREIGGRPFRQEAVLARLLKDLSNNPLRFRGRSKKGPSRGCFGVKLDRIGAMSGLGC.

The segment at 24–49 (PSDELNNEAEEMSPAASLPELNADQS) is disordered. The cysteines at positions 99 and 115 are disulfide-linked.

It belongs to the natriuretic peptide family. CNP-115 is differentially processed to produce CNP-38 and CNP-39 in the heart and CNP-22 in the brain.

It localises to the secreted. Its function is as follows. Hormone which may be vasoactive and natriuretic. Has a cGMP-stimulating activity. The protein is C-type natriuretic peptide prohormone of Scyliorhinus canicula (Small-spotted catshark).